The following is a 434-amino-acid chain: Alpha-enolase (434 aa).

At S2 the chain carries N-acetylserine. The residue at position 5 (K5) is an N6-acetyllysine. S40 is a Mg(2+) binding site. Position 44 is a phosphotyrosine (Y44). At K60 the chain carries N6-acetyllysine; alternate. K60 carries the post-translational modification N6-succinyllysine; alternate. 2 positions are modified to N6-acetyllysine: K64 and K71. K89 is modified (N6-acetyllysine; alternate). K89 carries the post-translational modification N6-succinyllysine; alternate. Residues K92 and K126 each carry the N6-acetyllysine modification. 2 residues coordinate substrate: H158 and E167. N6-acetyllysine is present on residues K193 and K199. N6-acetyllysine; alternate is present on K202. K202 participates in a covalent cross-link: Glycyl lysine isopeptide (Lys-Gly) (interchain with G-Cter in SUMO2); alternate. E210 acts as the Proton donor in catalysis. Residues K228 and K233 each carry the N6-acetyllysine; alternate modification. An N6-succinyllysine; alternate modification is found at K228. Residue K228 is modified to N6-(2-hydroxyisobutyryl)lysine; alternate. K233 carries the post-translational modification N6-malonyllysine; alternate. Residue D245 coordinates Mg(2+). S254 is modified (phosphoserine). K256 is modified (N6-acetyllysine). At S263 the chain carries Phosphoserine. N6-acetyllysine; alternate is present on K281. Residue K281 is modified to N6-(2-hydroxyisobutyryl)lysine; alternate. Y287 carries the post-translational modification Phosphotyrosine. Position 291 is a phosphoserine (S291). Positions 293 and 318 each coordinate Mg(2+). The substrate site is built by E293 and D318. N6-acetyllysine occurs at positions 335 and 343. The Proton acceptor role is filled by K343. Residues 370–373 and K394 contribute to the substrate site; that span reads SHRS. Residues 405–434 are required for interaction with PLG; it reads AKYNQILRIEEELGSKAKFAGRSFRNPLAK. K406 bears the N6-acetyllysine mark. K420 is subject to N6-acetyllysine; alternate. K420 carries the N6-succinyllysine; alternate modification. K420 bears the N6-malonyllysine; alternate mark.

This sequence belongs to the enolase family. As to quaternary structure, mammalian enolase is composed of 3 isozyme subunits, alpha, beta and gamma, which can form homodimers or heterodimers which are cell-type and development-specific. ENO1 interacts with PLG in the neuronal plasma membrane and promotes its activation. The C-terminal lysine is required for this binding. Interacts with ENO4 and PGAM2. Interacts with CMTM6. The cofactor is Mg(2+). In terms of processing, ISGylated. Lysine 2-hydroxyisobutyrylation (Khib) by p300/EP300 activates the phosphopyruvate hydratase activity. The alpha/alpha homodimer is expressed in embryo and in most adult tissues. The alpha/beta heterodimer and the beta/beta homodimer are found in striated muscle, and the alpha/gamma heterodimer and the gamma/gamma homodimer in neurons.

It is found in the cytoplasm. The protein localises to the cell membrane. The catalysed reaction is (2R)-2-phosphoglycerate = phosphoenolpyruvate + H2O. The protein operates within carbohydrate degradation; glycolysis; pyruvate from D-glyceraldehyde 3-phosphate: step 4/5. Its function is as follows. Glycolytic enzyme the catalyzes the conversion of 2-phosphoglycerate to phosphoenolpyruvate. In addition to glycolysis, involved in various processes such as growth control, hypoxia tolerance and allergic responses. May also function in the intravascular and pericellular fibrinolytic system due to its ability to serve as a receptor and activator of plasminogen on the cell surface of several cell-types such as leukocytes and neurons. Stimulates immunoglobulin production. The protein is Alpha-enolase (ENO1) of Bos taurus (Bovine).